Here is a 334-residue protein sequence, read N- to C-terminus: Cytochrome c oxidase assembly protein COX18, mitochondrial (334 aa).

A helical membrane pass occupies residues 168–188 (FKATVLVWIQLPMWIFMSFAL). Topologically, residues 189–224 (RNLSTGAAHSEAGFSVEEQLAAGGILWFSDLTAPDP) are mitochondrial matrix. A helical transmembrane segment spans residues 225-245 (TWILPVSLGVINLLIVEICVL). The Mitochondrial intermembrane segment spans residues 246-263 (QKIGMSRFQTYITYFVRA). Residues 264 to 284 (MSVLMIPIAATVPSSIVLYWL) form a helical membrane-spanning segment. The Mitochondrial matrix segment spans residues 285-334 (CSSFVGLSQNLLLRSPGFRQLCRIPSTKSDSETPYKDIFAAFNTKFISRK).

The protein belongs to the OXA1/ALB3/YidC family. As to quaternary structure, found in a complex with TMEM177, COA6, MT-CO2/COX2, COX20, SCO1 and SCO2. Interacts transiently with MT-CO2/COX2 during its maturation. Interacts with COX20 in a MT-CO2/COX2-dependent manner.

The protein localises to the mitochondrion inner membrane. In terms of biological role, mitochondrial membrane insertase required for the translocation of the C-terminus of cytochrome c oxidase subunit II (MT-CO2/COX2) across the mitochondrial inner membrane. Plays a role in MT-CO2/COX2 maturation following the COX20-mediated stabilization of newly synthesized MT-CO2/COX2 protein and before the action of the metallochaperones SCO1/2. Essential for the assembly and stability of the mitochondrial respiratory chain complex IV (also known as cytochrome c oxidase). The polypeptide is Cytochrome c oxidase assembly protein COX18, mitochondrial (COX18) (Pongo abelii (Sumatran orangutan)).